The primary structure comprises 724 residues: Probable serine/threonine-protein kinase KKQ8 (724 aa).

2 disordered regions span residues 1 to 81 and 93 to 188; these read MVMQ…RQRS and HPFR…KDIL. Position 19 is a phosphoserine (serine 19). The segment covering 45–54 has biased composition (low complexity); it reads PYRSSSTSPK. Over residues 95–106 the composition is skewed to polar residues; it reads FRQTGSGASNSP. The span at 143–162 shows a compositional bias: low complexity; sequence RSSSVSSCDSSNGTTSSSDS. Residues serine 232, serine 238, and serine 241 each carry the phosphoserine modification. 2 stretches are compositionally biased toward polar residues: residues 318–329 and 338–351; these read NASSLLPNVEKS and GQSP…SPTQ. The segment at 318-355 is disordered; that stretch reads NASSLLPNVEKSQTNHEKRTGQSPNDSNRSSPTQGRED. Residues 412-712 enclose the Protein kinase domain; sequence GHPVGLVGAG…VGKLLDMQWM (301 aa). ATP is bound by residues 418–426 and lysine 455; that span reads VGAGAYGEV. Aspartate 563 functions as the Proton acceptor in the catalytic mechanism.

It belongs to the protein kinase superfamily. CAMK Ser/Thr protein kinase family. NPR/HAL subfamily. HAL5 sub-subfamily.

The protein resides in the cytoplasm. It carries out the reaction L-seryl-[protein] + ATP = O-phospho-L-seryl-[protein] + ADP + H(+). The catalysed reaction is L-threonyl-[protein] + ATP = O-phospho-L-threonyl-[protein] + ADP + H(+). The polypeptide is Probable serine/threonine-protein kinase KKQ8 (KKQ8) (Saccharomyces cerevisiae (strain YJM789) (Baker's yeast)).